We begin with the raw amino-acid sequence, 388 residues long: Basigin (388 aa).

The first 22 residues, 1–22, serve as a signal peptide directing secretion; it reads MAAALLLALAFTFLSGQGACAA. Topologically, residues 23 to 326 are extracellular; it reads AGFLKAPMSQ…ISLRVRSRLA (304 aa). An Ig-like domain is found at 37 to 120; the sequence is GGSVVLHCEA…SSDPDRNHLT (84 aa). 3 disulfides stabilise this stretch: Cys-44/Cys-108, Cys-157/Cys-203, and Cys-242/Cys-304. Residues 138–219 enclose the Ig-like C2-type domain; it reads EPGTIVTSVQ…VGRGNINVEG (82 aa). Residues Asn-160, Asn-269, and Asn-305 are each glycosylated (N-linked (GlcNAc...) asparagine). The Ig-like V-type domain maps to 221–320; sequence PRIKVGKKSE…GSARETISLR (100 aa). The chain crosses the membrane as a helical span at residues 327-347; the sequence is ALWPFLGIVAEVLVLVTIIFI. The Cytoplasmic portion of the chain corresponds to 348–388; the sequence is YEKRRKPDQTLDEDDPGAAPLKGSGSHLNDKDKNVRQRNAT. The interval 355-388 is disordered; sequence DQTLDEDDPGAAPLKGSGSHLNDKDKNVRQRNAT. A Phosphothreonine modification is found at Thr-357. Ser-371 carries the phosphoserine modification.

Homooligomer. Interacts with NXNL1, SLC2A1 and SLC16A1/GLUT1. Interacts with XKR8; promoting its localization at the cell membrane. As to quaternary structure, homooligomer. Interacts with SLC16A1; interaction mediates SLC16A1 targeting to the plasma membrane. Interacts with SLC16A3; interaction mediates SLC16A3 targeting to the plasma membrane. Interacts with VEGFA, KDR/VEGFR2, PPIA/CYPA, SLC16A12, SLC16A11, ATP1B2, MAG, L1CAM and AJAP1. Interacts with PPIL2; regulates BSG transport to the cell membrane. In terms of assembly, interacts with SLC16A6; this interaction mediates targeting to the plasma membrane. In terms of tissue distribution, expressed in the skeletal muscle, liver, small intestine, kidney, testis, brain, heart and spleen. Also present in various immature cells and endothelia.

Its subcellular location is the cell membrane. It is found in the photoreceptor inner segment. It localises to the cell projection. The protein localises to the cilium. The protein resides in the photoreceptor outer segment. Its subcellular location is the endoplasmic reticulum membrane. It is found in the basolateral cell membrane. In terms of biological role, essential for normal retinal maturation and development. Acts as a retinal cell surface receptor for NXNL1 and plays an important role in NXNL1-mediated survival of retinal cone photoreceptors. In association with glucose transporter SLC16A1/GLUT1 and NXNL1, promotes retinal cone survival by enhancing aerobic glycolysis and accelerating the entry of glucose into photoreceptors. Signaling receptor for cyclophilins, essential for PPIA/CYPA and PPIB/CYPB-dependent signaling related to chemotaxis and adhesion of immune cells. Plays an important role in targeting the monocarboxylate transporters SLC16A1/GLUT1 and SLC16A3 to the plasma membrane. Acts as a coreceptor for vascular endothelial growth factor receptor 2 (KDR/VEGFR2) in endothelial cells enhancing its VEGFA-mediated activation and downstream signaling. Promotes angiogenesis through EPAS1/HIF2A-mediated up-regulation of VEGFA and KDR/VEGFR2 in endothelial cells. Plays an important role in spermatogenesis; mediates interactions between germ cells and Sertoli cell and is essential for the development/differentiation of germ cells to round spermatids. This Rattus norvegicus (Rat) protein is Basigin (Bsg).